Reading from the N-terminus, the 264-residue chain is ATP synthase subunit a (264 aa).

A run of 5 helical transmembrane segments spans residues 39-59 (LDTLIISVVLGALFILIFYII), 97-117 (VAPLALTIFIWVFLMNFMDLV), 139-159 (TADPTLTFAMSITVFVLVVFY), 205-225 (LFGNLFAGELIFILIALLPWW), and 239-259 (LLVITVQAFIFMMLTVVYISL).

This sequence belongs to the ATPase A chain family. As to quaternary structure, F-type ATPases have 2 components, CF(1) - the catalytic core - and CF(0) - the membrane proton channel. CF(1) has five subunits: alpha(3), beta(3), gamma(1), delta(1), epsilon(1). CF(0) has three main subunits: a(1), b(2) and c(9-12). The alpha and beta chains form an alternating ring which encloses part of the gamma chain. CF(1) is attached to CF(0) by a central stalk formed by the gamma and epsilon chains, while a peripheral stalk is formed by the delta and b chains.

It localises to the cell inner membrane. Its function is as follows. Key component of the proton channel; it plays a direct role in the translocation of protons across the membrane. The protein is ATP synthase subunit a of Coxiella burnetii (strain CbuG_Q212) (Coxiella burnetii (strain Q212)).